Reading from the N-terminus, the 520-residue chain is Dynein axonemal assembly factor 8 (520 aa).

4 disordered regions span residues 93-202 (PVLV…LRQE), 217-256 (RDACGPTSSDKGGVKEAPCHAAESAPRSKMPLVEPPEGPP), 328-366 (CARKVPADTPQDTKEADSGSRCASRKQGSQAGPGPQLAQ), and 388-520 (DHLS…LEQL). A compositionally biased stretch (basic and acidic residues) spans 111-125 (RTKDASSQEGRDPGR). Residue Ser-161 is modified to Phosphoserine. Phosphoserine is present on Ser-351. A compositionally biased stretch (acidic residues) spans 401–410 (DSEEEEEEEM). Positions 420-437 (SPSSLGLRTCTGKSQLLQ) are enriched in polar residues.

In terms of tissue distribution, expressed in respiratory ciliated cells (at protein level).

It localises to the dynein axonemal particle. The protein localises to the cytoplasm. In terms of biological role, in cyliated cells, dynein axonemal particle-specific protein required for deployment of ODA to the axoneme. Interacts with outer dynein arm (ODA) subunits. The sequence is that of Dynein axonemal assembly factor 8 from Homo sapiens (Human).